A 257-amino-acid polypeptide reads, in one-letter code: NAD-capped RNA hydrolase NudC (257 aa).

Residues Lys25 and Arg69 each contribute to the substrate site. 2 residues coordinate Zn(2+): Cys98 and Cys101. Substrate is bound at residue Glu111. Positions 116 and 119 each coordinate Zn(2+). Tyr124 contacts substrate. Residues 125 to 248 (PQIAPCIIVA…TVARRLIEDT (124 aa)) enclose the Nudix hydrolase domain. A divalent metal cation is bound by residues Ala158, Glu174, and Glu178. Residues 159 to 180 (GFVEVGETLEQAVAREVMEESG) carry the Nudix box motif. 192-199 (QPWPFPQS) contributes to the substrate binding site. Glu219 is an a divalent metal cation binding site. Ala241 contacts substrate.

Belongs to the Nudix hydrolase family. NudC subfamily. Homodimer. Mg(2+) serves as cofactor. It depends on Mn(2+) as a cofactor. The cofactor is Zn(2+).

It catalyses the reaction a 5'-end NAD(+)-phospho-ribonucleoside in mRNA + H2O = a 5'-end phospho-adenosine-phospho-ribonucleoside in mRNA + beta-nicotinamide D-ribonucleotide + 2 H(+). The enzyme catalyses NAD(+) + H2O = beta-nicotinamide D-ribonucleotide + AMP + 2 H(+). It carries out the reaction NADH + H2O = reduced beta-nicotinamide D-ribonucleotide + AMP + 2 H(+). In terms of biological role, mRNA decapping enzyme that specifically removes the nicotinamide adenine dinucleotide (NAD) cap from a subset of mRNAs by hydrolyzing the diphosphate linkage to produce nicotinamide mononucleotide (NMN) and 5' monophosphate mRNA. The NAD-cap is present at the 5'-end of some mRNAs and stabilizes RNA against 5'-processing. Has preference for mRNAs with a 5'-end purine. Catalyzes the hydrolysis of a broad range of dinucleotide pyrophosphates. The polypeptide is NAD-capped RNA hydrolase NudC (Escherichia coli O7:K1 (strain IAI39 / ExPEC)).